A 287-amino-acid chain; its full sequence is ATP synthase gamma chain (287 aa).

The protein belongs to the ATPase gamma chain family. F-type ATPases have 2 components, CF(1) - the catalytic core - and CF(0) - the membrane proton channel. CF(1) has five subunits: alpha(3), beta(3), gamma(1), delta(1), epsilon(1). CF(0) has three main subunits: a, b and c.

The protein resides in the cell inner membrane. Produces ATP from ADP in the presence of a proton gradient across the membrane. The gamma chain is believed to be important in regulating ATPase activity and the flow of protons through the CF(0) complex. The sequence is that of ATP synthase gamma chain from Methylococcus capsulatus (strain ATCC 33009 / NCIMB 11132 / Bath).